The following is a 142-amino-acid chain: Transcription antitermination protein NusB (142 aa).

This sequence belongs to the NusB family.

Its function is as follows. Involved in transcription antitermination. Required for transcription of ribosomal RNA (rRNA) genes. Binds specifically to the boxA antiterminator sequence of the ribosomal RNA (rrn) operons. The chain is Transcription antitermination protein NusB from Trichlorobacter lovleyi (strain ATCC BAA-1151 / DSM 17278 / SZ) (Geobacter lovleyi).